We begin with the raw amino-acid sequence, 87 residues long: Down syndrome critical region protein 10 (87 aa).

In terms of tissue distribution, expressed in placenta and testis.

The chain is Down syndrome critical region protein 10 (DSCR10) from Homo sapiens (Human).